The primary structure comprises 276 residues: Adenylate kinase (276 aa).

52 to 57 (GAGKGT) serves as a coordination point for ATP. Residues 72–101 (ATGDMLRAQVAAKTPLGREAKKIMDAGGLV) form an NMP region. AMP is bound by residues threonine 73, arginine 78, 99–101 (GLV), 128–131 (GFPR), and glutamine 135. Positions 169 to 206 (GRLVHPASGRSYHKIFNPPKAPMTDDVTGEPLIQRSDD) are LID. ATP is bound by residues arginine 170 and 179-180 (SY). Arginine 203 and arginine 214 together coordinate AMP. Glutamine 242 contributes to the ATP binding site.

This sequence belongs to the adenylate kinase family. AK2 subfamily. Monomer.

The protein localises to the cytoplasm. Its subcellular location is the cytosol. It is found in the mitochondrion intermembrane space. It carries out the reaction AMP + ATP = 2 ADP. In terms of biological role, catalyzes the reversible transfer of the terminal phosphate group between ATP and AMP. Plays an important role in cellular energy homeostasis and in adenine nucleotide metabolism. Adenylate kinase activity is critical for regulation of the phosphate utilization and the AMP de novo biosynthesis pathways. This chain is Adenylate kinase (adk1), found in Pyrenophora tritici-repentis (strain Pt-1C-BFP) (Wheat tan spot fungus).